Here is a 264-residue protein sequence, read N- to C-terminus: Small ribosomal subunit protein uS3 (264 aa).

Residues 39–107 (VRDFLKKKLK…PVHVNIEEIR (69 aa)) form the KH type-2 domain. The interval 211-264 (NDAPVVEEPQDDRRRRPGRPEGRRREGEGRPGGNRRGGAGAGRRAAPGDAKSGE) is disordered. Over residues 221 to 239 (DDRRRRPGRPEGRRREGEG) the composition is skewed to basic and acidic residues. The segment covering 240–251 (RPGGNRRGGAGA) has biased composition (gly residues).

This sequence belongs to the universal ribosomal protein uS3 family. As to quaternary structure, part of the 30S ribosomal subunit. Forms a tight complex with proteins S10 and S14.

Functionally, binds the lower part of the 30S subunit head. Binds mRNA in the 70S ribosome, positioning it for translation. The sequence is that of Small ribosomal subunit protein uS3 from Cupriavidus pinatubonensis (strain JMP 134 / LMG 1197) (Cupriavidus necator (strain JMP 134)).